The following is a 706-amino-acid chain: Cyclic nucleotide-gated channel alpha-3 (706 aa).

Residues methionine 1–histidine 189 lie on the Cytoplasmic side of the membrane. The segment at arginine 113–serine 177 is disordered. The segment covering serine 147–serine 177 has biased composition (basic and acidic residues). A helical membrane pass occupies residues tryptophan 190 to phenylalanine 211. The Extracellular portion of the chain corresponds to aspartate 212–glutamate 217. A helical transmembrane segment spans residues histidine 218–leucine 238. The Cytoplasmic portion of the chain corresponds to valine 239–threonine 265. A helical membrane pass occupies residues leucine 266–leucine 285. Residues glycine 286–tyrosine 289 lie on the Extracellular side of the membrane. The helical transmembrane segment at proline 290–phenylalanine 307 threads the bilayer. At aspartate 308 to proline 317 the chain is on the cytoplasmic side. Positions proline 317–methionine 425 are ion conduction pathway. A helical membrane pass occupies residues asparagine 318–tyrosine 340. The Extracellular portion of the chain corresponds to phenylalanine 341–arginine 366. N-linked (GalNAc...) asparagine glycosylation is present at asparagine 358. 2 consecutive transmembrane segments (helical) span residues leucine 367–tyrosine 397 and leucine 398–isoleucine 422. Positions threonine 384–glutamate 387 are selectivity filter. Over serine 423–proline 706 the chain is Cytoplasmic. The segment at alanine 427 to aspartate 504 is C-linker. Residues alanine 507 to lysine 627 are cyclic nucleotide-binding domain. 3',5'-cyclic GMP contacts are provided by glycine 567, glutamate 568, serine 570, arginine 583, threonine 584, and aspartate 628. Residues isoleucine 645–valine 688 are a coiled coil. A disordered region spans residues glutamate 685 to proline 706.

The protein belongs to the cyclic nucleotide-gated cation channel (TC 1.A.1.5) family. CNGA3 subfamily. Forms heterotetrameric channels composed of CNGA3 and CNGB3 subunits with 3:1 stoichiometry. As to expression, testis, kidney, retinal cone (at protein level) and heart.

The protein resides in the cell membrane. The enzyme catalyses Ca(2+)(in) = Ca(2+)(out). The catalysed reaction is Na(+)(in) = Na(+)(out). It carries out the reaction K(+)(in) = K(+)(out). It catalyses the reaction NH4(+)(in) = NH4(+)(out). The enzyme catalyses Rb(+)(in) = Rb(+)(out). The catalysed reaction is Li(+)(in) = Li(+)(out). It carries out the reaction Cs(+)(in) = Cs(+)(out). Its activity is regulated as follows. Ca(2+) influx is inhibited by extracellular Mg(2+) ions. Its function is as follows. Pore-forming subunit of the cone cyclic nucleotide-gated channel. Mediates cone photoresponses at bright light converting transient changes in intracellular cGMP levels into electrical signals. In the dark, cGMP levels are high and keep the channel open enabling a steady inward current carried by Na(+) and Ca(2+) ions that leads to membrane depolarization and neurotransmitter release from synaptic terminals. Upon photon absorption cGMP levels decline leading to channel closure and membrane hyperpolarization that ultimately slows neurotransmitter release and signals the presence of light, the end point of the phototransduction cascade. Pore-forming subunit of the gustatory cyclic nucleotide-gated channel. In the taste buds, may sense oral extracellular pH and conduct ion currents that modulate the excitability of taste cells. Conducts cGMP- and cAMP-gated ion currents, with permeability for monovalent and divalent cations. The polypeptide is Cyclic nucleotide-gated channel alpha-3 (Bos taurus (Bovine)).